Here is a 165-residue protein sequence, read N- to C-terminus: Protein SprT (165 aa).

A SprT-like domain is found at 20–163 (EKLAQANLKL…RCVHCGEQLV (144 aa)). Zn(2+) is bound at residue His78. Glu79 is an active-site residue. Zn(2+) is bound at residue His82.

It belongs to the SprT family. Requires Zn(2+) as cofactor.

It is found in the cytoplasm. The chain is Protein SprT from Shigella sonnei (strain Ss046).